Here is a 374-residue protein sequence, read N- to C-terminus: Alcohol dehydrogenase 1 (374 aa).

Serine 1 is subject to N-acetylserine. The Zn(2+) site is built by cysteine 46, histidine 67, cysteine 97, cysteine 100, cysteine 103, cysteine 111, and cysteine 174. Residues 199-204, aspartate 223, lysine 228, 292-294, and arginine 369 contribute to the NAD(+) site; these read GLGGVG and VGV.

This sequence belongs to the zinc-containing alcohol dehydrogenase family. Class-I subfamily. The cofactor is Zn(2+).

Its subcellular location is the cytoplasm. The enzyme catalyses a primary alcohol + NAD(+) = an aldehyde + NADH + H(+). It catalyses the reaction a secondary alcohol + NAD(+) = a ketone + NADH + H(+). This is Alcohol dehydrogenase 1 from Alligator mississippiensis (American alligator).